A 503-amino-acid chain; its full sequence is LEM domain-containing protein 2 (503 aa).

Alanine 2 bears the N-acetylalanine mark. Residues 2 to 42 enclose the LEM domain; the sequence is AGLSDLELRRELQALGFQPGPITDTTRDVYRNKLRRLRGEA. The span at 42 to 74 shows a compositional bias: basic and acidic residues; that stretch reads ARLRDEERLREEARPRGEERLREEARLREDAPL. Disordered regions lie at residues 42 to 97 and 127 to 157; these read ARLR…SGSA and AQLR…GPGL. Residues 74 to 130 are required for nuclear retention and interaction with LMNA isoform C; it reads LRARPAAASPRAEPWLSQPASGSAYATPGAYGDIRPSAASWVGSRGLAYPARPAQLR. A compositionally biased stretch (low complexity) spans 75-87; the sequence is RARPAAASPRAEP. Phosphoserine occurs at positions 166 and 175. Residues 172–198 are disordered; it reads LPSSLLGPDPRPGLRATRAGPAGAARA. The span at 184 to 197 shows a compositional bias: low complexity; that stretch reads GLRATRAGPAGAAR. 2 helical membrane passes run 213-233 and 377-397; these read LLLW…WVKM and VTNV…LILL. The interval 395 to 503 is winged-Helix (WH); sequence ILLKYRWRKL…KPSSFSDSER (109 aa). Phosphoserine is present on residues serine 497, serine 499, and serine 501.

As to quaternary structure, interacts (via N-terminus) with LMNA isoform C (via C-terminus) (in vitro). Interacts (via LEM domain) with BANF1. Interacts (via C-terminus) with CHMP7. Interacts (via N-terminus) with tubulin; the interaction causes microtubule bundling and stabilization (in vitro). Post-translationally, phosphorylated; strongly phosphorylated in mitosis compared to G1/S. Ubiquitously expressed, including bone marrow, brain, kidney, colon, skeletal muscle, thymus, testis and uterus.

It localises to the nucleus inner membrane. It is found in the nucleus envelope. Its subcellular location is the cytoplasm. The protein resides in the cytoskeleton. The protein localises to the spindle. Its function is as follows. Nuclear lamina-associated inner nuclear membrane protein that is involved in nuclear structure organization, maintenance of nuclear envelope (NE) integrity and NE reformation after mitosis. Plays a role as transmembrane adapter for the endosomal sorting complexes required for transport (ESCRT), and is thereby involved in ESCRT-mediated NE reformation. Promotes ESCRT-mediated NE closure by recruiting CHMP7 and downstream ESCRT-III proteins IST1/CHMP8 and CHMP2A to the reforming NE during anaphase. During nuclear reassembly, condenses into a liquid-like coating around microtubule spindles and coassembles with CHMP7 to form a macromolecular O-ring seal at the confluence between membranes, chromatin, and the spindle to facilitate early nuclear sealing. Plays a role in the organization of heterochromatin associated with the NE and in the maintenance of NE organization under mechanical stress. Required for embryonic development and involved in regulation of several signaling pathways such as MAPK and AKT. Required for myoblast differentiation involving regulation of ERK signaling. Essential for cardiac homeostasis and proper heart function. In Homo sapiens (Human), this protein is LEM domain-containing protein 2 (LEMD2).